A 279-amino-acid polypeptide reads, in one-letter code: Indole-3-glycerol phosphate synthase (279 aa).

The protein belongs to the TrpC family.

The enzyme catalyses 1-(2-carboxyphenylamino)-1-deoxy-D-ribulose 5-phosphate + H(+) = (1S,2R)-1-C-(indol-3-yl)glycerol 3-phosphate + CO2 + H2O. It participates in amino-acid biosynthesis; L-tryptophan biosynthesis; L-tryptophan from chorismate: step 4/5. The polypeptide is Indole-3-glycerol phosphate synthase (Ectopseudomonas mendocina (strain ymp) (Pseudomonas mendocina)).